The primary structure comprises 372 residues: Homoserine dehydrogenase (372 aa).

Residues Val13, Gly15, Val16, and Thr99 each contribute to the NAD(+) site. Residues Val16 and Thr99 each contribute to the NADP(+) site. NADPH-binding residues include Val16, Thr99, Ser100, and Lys123. NADP(+) is bound at residue Lys123. The Na(+) site is built by Glu150, Val153, Ala155, and Leu157. The NADP(+) site is built by Gly216 and Glu219. L-homoserine contacts are provided by Glu219 and Asp230. Residue Lys234 is the Proton donor of the active site. Gly352 is an NAD(+) binding site. Gly352 contacts NADP(+). Gly352 lines the NADPH pocket.

The protein belongs to the homoserine dehydrogenase family. As to quaternary structure, homodimer. The cofactor is a metal cation.

The catalysed reaction is L-homoserine + NADP(+) = L-aspartate 4-semialdehyde + NADPH + H(+). It carries out the reaction L-homoserine + NAD(+) = L-aspartate 4-semialdehyde + NADH + H(+). Its pathway is amino-acid biosynthesis; L-methionine biosynthesis via de novo pathway; L-homoserine from L-aspartate: step 3/3. The protein operates within amino-acid biosynthesis; L-threonine biosynthesis; L-threonine from L-aspartate: step 3/5. Catalyzes the conversion of L-aspartate-beta-semialdehyde (L-Asa) to L-homoserine (L-Hse), the third step in the biosynthesis of amino acids that derive from aspartate (the aspartate family of amino acids), including methioinine and threonine, the latter of which is a precursor to isoleucine; production of homoserine leads to a branch-point in the pathway as it can either be O-phosphorylated for processing to threonine, or O-acylated for processing to methionine. This is Homoserine dehydrogenase from Paracoccidioides brasiliensis (strain Pb18).